We begin with the raw amino-acid sequence, 130 residues long: Peptide methionine sulfoxide reductase MsrB (130 aa).

One can recognise a MsrB domain in the interval Met1–Ser122. Residues Cys39, Cys42, Cys88, and Cys91 each contribute to the Zn(2+) site. Catalysis depends on Cys111, which acts as the Nucleophile.

This sequence belongs to the MsrB Met sulfoxide reductase family. The cofactor is Zn(2+).

The enzyme catalyses L-methionyl-[protein] + [thioredoxin]-disulfide + H2O = L-methionyl-(R)-S-oxide-[protein] + [thioredoxin]-dithiol. The chain is Peptide methionine sulfoxide reductase MsrB from Pasteurella multocida (strain Pm70).